The sequence spans 489 residues: Coiled-coil domain-containing protein 77 (489 aa).

S38 is subject to Phosphoserine. Coiled-coil stretches lie at residues 57-120 (SQEL…QVCL) and 212-487 (ERHQ…NALR).

The sequence is that of Coiled-coil domain-containing protein 77 (Ccdc77) from Mus musculus (Mouse).